We begin with the raw amino-acid sequence, 81 residues long: ATP synthase subunit c, chloroplastic (81 aa).

The next 2 helical transmembrane spans lie at 3-23 (PLIAAASVIAAGLAVGLASIG) and 57-77 (LAFMEALTIYGLVVALALLFA).

It belongs to the ATPase C chain family. As to quaternary structure, F-type ATPases have 2 components, F(1) - the catalytic core - and F(0) - the membrane proton channel. F(1) has five subunits: alpha(3), beta(3), gamma(1), delta(1), epsilon(1). F(0) has four main subunits: a(1), b(1), b'(1) and c(10-14). The alpha and beta chains form an alternating ring which encloses part of the gamma chain. F(1) is attached to F(0) by a central stalk formed by the gamma and epsilon chains, while a peripheral stalk is formed by the delta, b and b' chains.

Its subcellular location is the plastid. It localises to the chloroplast thylakoid membrane. Functionally, f(1)F(0) ATP synthase produces ATP from ADP in the presence of a proton or sodium gradient. F-type ATPases consist of two structural domains, F(1) containing the extramembraneous catalytic core and F(0) containing the membrane proton channel, linked together by a central stalk and a peripheral stalk. During catalysis, ATP synthesis in the catalytic domain of F(1) is coupled via a rotary mechanism of the central stalk subunits to proton translocation. Key component of the F(0) channel; it plays a direct role in translocation across the membrane. A homomeric c-ring of between 10-14 subunits forms the central stalk rotor element with the F(1) delta and epsilon subunits. This is ATP synthase subunit c, chloroplastic from Pisum sativum (Garden pea).